Consider the following 393-residue polypeptide: Protein TsgA (393 aa).

The next 12 helical transmembrane spans lie at 11-31 (WISF…GMVM), 51-71 (FLNA…EIVP), 78-98 (FGFL…SLAL), 101-121 (TAMF…TFLI), 140-160 (FFSM…AHSI), 162-182 (WYWV…LTFG), 206-226 (IGVL…LGFI), 245-265 (TLVS…SFIL), 273-293 (ILTV…TGTP), 297-317 (AWSI…IITL), 332-352 (FVLT…GPIV), and 361-381 (LLTA…LGFV).

It belongs to the major facilitator superfamily. TsgA family.

It is found in the cell inner membrane. This is Protein TsgA from Shigella boydii serotype 18 (strain CDC 3083-94 / BS512).